A 420-amino-acid chain; its full sequence is Carbohydrate sulfotransferase 1 (420 aa).

Met-1 is a topological domain (cytoplasmic). The helical; Signal-anchor for type II membrane protein transmembrane segment at 2 to 23 (QCSWKAVILLALVSIAIQYTAI) threads the bilayer. Residues 24 to 420 (RTFTAKPFHI…IEDKTFIPFL (397 aa)) are Lumenal-facing. Asn-64 carries N-linked (GlcNAc...) asparagine glycosylation. 77–83 (TRSGSSF) serves as a coordination point for 3'-phosphoadenylyl sulfate. N-linked (GlcNAc...) asparagine glycans are attached at residues Asn-153 and Asn-197. 242–250 (RDPRGILSS) contacts 3'-phosphoadenylyl sulfate. 2 N-linked (GlcNAc...) asparagine glycosylation sites follow: Asn-342 and Asn-405.

Belongs to the sulfotransferase 1 family. Gal/GlcNAc/GalNAc subfamily.

The protein resides in the golgi apparatus membrane. The enzyme catalyses 3'-phosphoadenylyl sulfate + keratan = adenosine 3',5'-bisphosphate + keratan 6'-sulfate.. Functionally, sulfotransferase that utilizes 3'-phospho-5'-adenylyl sulfate (PAPS) as sulfonate donor to catalyze the transfer of sulfate to position 6 of galactose (Gal) residues of keratan. The chain is Carbohydrate sulfotransferase 1 (chst1) from Danio rerio (Zebrafish).